Here is a 731-residue protein sequence, read N- to C-terminus: Lanosterol synthase ERG7 (731 aa).

T2 is subject to N-acetylthreonine. The PFTB 1 repeat unit spans residues 125–167; the sequence is RIELIRYIVNTAHPVDGGWGLHSVDKSTVFGTVLNYVILRLLG. Residue D456 is the Proton donor of the active site. One copy of the PFTB 2 repeat lies at 615–661; that stretch reads VRKGCDFLVSKQMKDGGWGESMKSSELHSYVDSEKSLVVQTAWALIA.

It belongs to the terpene cyclase/mutase family.

It is found in the lipid droplet. It localises to the endoplasmic reticulum membrane. It carries out the reaction (S)-2,3-epoxysqualene = lanosterol. It functions in the pathway terpene metabolism; lanosterol biosynthesis; lanosterol from farnesyl diphosphate: step 3/3. Its activity is regulated as follows. Catalytic activity requires the presence of ERG27. In terms of biological role, lanosterol synthase; part of the third module of ergosterol biosynthesis pathway that includes the late steps of the pathway. ERG7 catalyzes the cyclization of (S)-2,3 oxidosqualene to lanosterol, a reaction that forms the sterol core. The third module or late pathway involves the ergosterol synthesis itself through consecutive reactions that mainly occur in the endoplasmic reticulum (ER) membrane. Firstly, the squalene synthase ERG9 catalyzes the condensation of 2 farnesyl pyrophosphate moieties to form squalene, which is the precursor of all steroids. Squalene synthase is crucial for balancing the incorporation of farnesyl diphosphate (FPP) into sterol and nonsterol isoprene synthesis. Secondly, the squalene epoxidase ERG1 catalyzes the stereospecific oxidation of squalene to (S)-2,3-epoxysqualene, which is considered to be a rate-limiting enzyme in steroid biosynthesis. Then, the lanosterol synthase ERG7 catalyzes the cyclization of (S)-2,3 oxidosqualene to lanosterol, a reaction that forms the sterol core. In the next steps, lanosterol is transformed to zymosterol through a complex process involving various demethylation, reduction and desaturation reactions. The lanosterol 14-alpha-demethylase ERG11 (also known as CYP51) catalyzes C14-demethylation of lanosterol to produce 4,4'-dimethyl cholesta-8,14,24-triene-3-beta-ol, which is critical for ergosterol biosynthesis. The C-14 reductase ERG24 reduces the C14=C15 double bond of 4,4-dimethyl-cholesta-8,14,24-trienol to produce 4,4-dimethyl-cholesta-8,24-dienol. 4,4-dimethyl-cholesta-8,24-dienol is substrate of the C-4 demethylation complex ERG25-ERG26-ERG27 in which ERG25 catalyzes the three-step monooxygenation required for the demethylation of 4,4-dimethyl and 4alpha-methylsterols, ERG26 catalyzes the oxidative decarboxylation that results in a reduction of the 3-beta-hydroxy group at the C-3 carbon to an oxo group, and ERG27 is responsible for the reduction of the keto group on the C-3. ERG28 has a role as a scaffold to help anchor ERG25, ERG26 and ERG27 to the endoplasmic reticulum and ERG29 regulates the activity of the iron-containing C4-methylsterol oxidase ERG25. Then, the sterol 24-C-methyltransferase ERG6 catalyzes the methyl transfer from S-adenosyl-methionine to the C-24 of zymosterol to form fecosterol. The C-8 sterol isomerase ERG2 catalyzes the reaction which results in unsaturation at C-7 in the B ring of sterols and thus converts fecosterol to episterol. The sterol-C5-desaturase ERG3 then catalyzes the introduction of a C-5 double bond in the B ring to produce 5-dehydroepisterol. The C-22 sterol desaturase ERG5 further converts 5-dehydroepisterol into ergosta-5,7,22,24(28)-tetraen-3beta-ol by forming the C-22(23) double bond in the sterol side chain. Finally, ergosta-5,7,22,24(28)-tetraen-3beta-ol is substrate of the C-24(28) sterol reductase ERG4 to produce ergosterol. The chain is Lanosterol synthase ERG7 from Saccharomyces cerevisiae (strain ATCC 204508 / S288c) (Baker's yeast).